The sequence spans 373 residues: G protein-coupled receptor 137Ba (373 aa).

Residues 1-15 are Lumenal-facing; the sequence is MQKDSLPTLSPAVPP. The chain crosses the membrane as a helical span at residues 16–36; it reads YVMLGLTVAYTIFYCLLFVFV. Topologically, residues 37–55 are cytoplasmic; it reads YVQLWLVLRYRHKRFSYQT. Residues 56-76 form a helical membrane-spanning segment; it reads VFLFLCLLWAALRALLFSFYF. At 77-84 the chain is on the lumenal side; it reads KNCVTANT. The chain crosses the membrane as a helical span at residues 85–105; the sequence is LGPFCFWLLYCFPVCLQFFTL. Residues 106 to 135 are Cytoplasmic-facing; sequence SLMNLYFAQVIFKAKSKYSPELQKYRLPLY. A helical transmembrane segment spans residues 136–156; it reads LLFLSISLLFLLVNLTCALLV. The Lumenal segment spans residues 157 to 176; that stretch reads KINRANTETVVLVRVTVNDS. A helical membrane pass occupies residues 177–197; that stretch reads LFVLCAVSLSLCLYRIAKMSL. Residues 198–213 are Cytoplasmic-facing; the sequence is ANIYLEAKGTSVCQVT. Residues 214–234 form a helical membrane-spanning segment; it reads LIGVTVVLLYSSRACYNLVVL. Residues 235 to 268 are Lumenal-facing; it reads ALTKIKSINSFDYDWYNVSDQADLKSTLGDAGYV. Residues 269-289 form a helical membrane-spanning segment; that stretch reads VFGVILFVWELLPTSLVVYFF. Residues 290 to 373 are Cytoplasmic-facing; sequence RVRKPTLDRS…HLAPEELNPY (84 aa).

This sequence belongs to the GPR137 family.

The protein resides in the lysosome membrane. In terms of biological role, lysosomal integral membrane protein that regulates the localization and activity of mTORC1, a signaling complex promoting cell growth in response to growth factors, energy levels, and amino acids. Interacts with Rag GTPases and increases the lysosomial localization and activity of Rag GTPases and thereby regulates mTORC1 translocation and activity in lysosome. Also acts as a negative regulator of osteoclast activity. May be involved in interleukin-4-induced M2 macrophage polarization. Functionally, also acts as a negative regulator of osteoclast activity. May be involved in interleukin-4-induced M2 macrophage polarization. The chain is G protein-coupled receptor 137Ba from Danio rerio (Zebrafish).